Consider the following 52-residue polypeptide: MASKNREIIKLKSTESSEMYWTVKNKRKTSGRLELKKYDRKLRKHVIFKEAK.

It belongs to the bacterial ribosomal protein bL33 family.

The chain is Large ribosomal subunit protein bL33 from Chlamydia trachomatis serovar A (strain ATCC VR-571B / DSM 19440 / HAR-13).